Consider the following 625-residue polypeptide: Mitochondrial Rho GTPase 1 (625 aa).

The Cytoplasmic portion of the chain corresponds to 1–601 (MSDDETLADV…LRRVFYLNDS (601 aa)). A Miro 1 domain is found at 3-170 (DDETLADVRI…EIFYYAQKAV (168 aa)). GTP is bound by residues 16–23 (GDEGCGKT), 62–66 (DLSIK), and 123–126 (NKSD). EF-hand domains follow at residues 188–223 (RARK…CFGI) and 308–343 (EGVQ…CPVP). 10 residues coordinate Ca(2+): Asp201, Asp203, Asp205, Tyr207, Glu212, Asp321, Asp323, Asp325, Cys327, and Glu332. Residues 420–625 (HGTDRKVFQC…LAGFLVLKNL (206 aa)) form the Miro 2 domain. GTP is bound by residues 433–440 (GAKDAGKT), 470–474 (RVKEE), and 537–540 (TKVE). A helical; Anchor for type IV membrane protein membrane pass occupies residues 602 to 622 (NLLSKITFGAAIVALAGFLVL). The Mitochondrial intermembrane segment spans residues 623 to 625 (KNL).

Belongs to the mitochondrial Rho GTPase family.

It is found in the mitochondrion outer membrane. In terms of biological role, mitochondrial GTPase involved in mitochondrial trafficking. Probably involved in control of anterograde transport of mitochondria and their subcellular distribution. Plays a role in maintaining mitochondrial morphology. The polypeptide is Mitochondrial Rho GTPase 1 (Caenorhabditis elegans).